The primary structure comprises 699 residues: Elongation factor G (699 aa).

Positions 10–292 constitute a tr-type G domain; that stretch reads DRTRNIGIMA…AVIDYLPSPT (283 aa). GTP is bound by residues 19–26, 90–94, and 144–147; these read AHIDAGKT, DTPGH, and NKMD.

This sequence belongs to the TRAFAC class translation factor GTPase superfamily. Classic translation factor GTPase family. EF-G/EF-2 subfamily.

The protein resides in the cytoplasm. In terms of biological role, catalyzes the GTP-dependent ribosomal translocation step during translation elongation. During this step, the ribosome changes from the pre-translocational (PRE) to the post-translocational (POST) state as the newly formed A-site-bound peptidyl-tRNA and P-site-bound deacylated tRNA move to the P and E sites, respectively. Catalyzes the coordinated movement of the two tRNA molecules, the mRNA and conformational changes in the ribosome. In Coxiella burnetii (strain Dugway 5J108-111), this protein is Elongation factor G.